Consider the following 392-residue polypeptide: 8-amino-7-oxononanoate synthase (392 aa).

Residue arginine 18 participates in substrate binding. 105–106 (GY) provides a ligand contact to pyridoxal 5'-phosphate. Histidine 130 serves as a coordination point for substrate. 3 residues coordinate pyridoxal 5'-phosphate: serine 177, histidine 205, and threonine 234. N6-(pyridoxal phosphate)lysine is present on lysine 237. Residue threonine 351 participates in substrate binding.

Belongs to the class-II pyridoxal-phosphate-dependent aminotransferase family. BioF subfamily. As to quaternary structure, homodimer. Pyridoxal 5'-phosphate is required as a cofactor.

The enzyme catalyses 6-carboxyhexanoyl-[ACP] + L-alanine + H(+) = (8S)-8-amino-7-oxononanoate + holo-[ACP] + CO2. The protein operates within cofactor biosynthesis; biotin biosynthesis. Functionally, catalyzes the decarboxylative condensation of pimeloyl-[acyl-carrier protein] and L-alanine to produce 8-amino-7-oxononanoate (AON), [acyl-carrier protein], and carbon dioxide. This is 8-amino-7-oxononanoate synthase from Thioalkalivibrio sulfidiphilus (strain HL-EbGR7).